Here is a 568-residue protein sequence, read N- to C-terminus: Serine/threonine-protein kinase WNK2 (568 aa).

Residues 24–281 (GRYDEILGKG…ALELLQDPFL (258 aa)) enclose the Protein kinase domain. ATP contacts are provided by residues 104 to 107 (TELF) and Lys154. The Proton acceptor role is filled by Asp171. A disordered region spans residues 453 to 473 (SSGEKSHHNHHEFDSSEDKSC). A compositionally biased stretch (basic and acidic residues) spans 463–472 (HEFDSSEDKS).

This sequence belongs to the protein kinase superfamily. Ser/Thr protein kinase family. WNK subfamily. Autophosphorylated.

It catalyses the reaction L-seryl-[protein] + ATP = O-phospho-L-seryl-[protein] + ADP + H(+). It carries out the reaction L-threonyl-[protein] + ATP = O-phospho-L-threonyl-[protein] + ADP + H(+). In terms of biological role, regulates flowering time by modulating the photoperiod pathway. Possesses kinase activity in vitro. The sequence is that of Serine/threonine-protein kinase WNK2 (WNK2) from Arabidopsis thaliana (Mouse-ear cress).